The following is a 319-amino-acid chain: tRNA uridine(34) hydroxylase (319 aa).

Positions glycine 123 to serine 221 constitute a Rhodanese domain. The active-site Cysteine persulfide intermediate is the cysteine 181. Residues alanine 298–arginine 319 are disordered.

The protein belongs to the TrhO family.

The catalysed reaction is uridine(34) in tRNA + AH2 + O2 = 5-hydroxyuridine(34) in tRNA + A + H2O. Functionally, catalyzes oxygen-dependent 5-hydroxyuridine (ho5U) modification at position 34 in tRNAs. The protein is tRNA uridine(34) hydroxylase of Albidiferax ferrireducens (strain ATCC BAA-621 / DSM 15236 / T118) (Rhodoferax ferrireducens).